The following is a 482-amino-acid chain: Putative ankyrin repeat protein FPV232 (482 aa).

ANK repeat units lie at residues 36–65, 69–100, 101–128, 129–161, 166–195, 199–228, 232–265, 270–297, and 301–332; these read IPLI…NVNE, RYLT…DLSS, YEER…DGNR, TIDD…DTKI, KLKT…EVNS, GNNS…NTDH, CGTT…SVNI, LGFT…DPNI, and EKET…LRAF.

This Fowlpox virus (strain NVSL) (FPV) protein is Putative ankyrin repeat protein FPV232.